The following is a 347-amino-acid chain: Microneme protein 21 (347 aa).

It localises to the cytoplasmic vesicle. The protein resides in the secretory vesicle. It is found in the microneme. The protein localises to the secreted. The sequence is that of Microneme protein 21 from Toxoplasma gondii.